A 201-amino-acid chain; its full sequence is Peptidyl-tRNA hydrolase (201 aa).

A tRNA-binding site is contributed by Tyr15. The active-site Proton acceptor is the His20. The tRNA site is built by Tyr66, Asn68, and Asn114.

Belongs to the PTH family. In terms of assembly, monomer.

Its subcellular location is the cytoplasm. The enzyme catalyses an N-acyl-L-alpha-aminoacyl-tRNA + H2O = an N-acyl-L-amino acid + a tRNA + H(+). In terms of biological role, hydrolyzes ribosome-free peptidyl-tRNAs (with 1 or more amino acids incorporated), which drop off the ribosome during protein synthesis, or as a result of ribosome stalling. Functionally, catalyzes the release of premature peptidyl moieties from peptidyl-tRNA molecules trapped in stalled 50S ribosomal subunits, and thus maintains levels of free tRNAs and 50S ribosomes. This Burkholderia pseudomallei (strain K96243) protein is Peptidyl-tRNA hydrolase.